The following is a 120-amino-acid chain: Large ribosomal subunit protein uL18 (120 aa).

This sequence belongs to the universal ribosomal protein uL18 family. Part of the 50S ribosomal subunit. Part of the 5S rRNA/L5/L18/L25 subcomplex. Contacts the 23S rRNA and 5S rRNA. Required for catalysis of RNase M5.

Its function is as follows. This is one of the proteins that bind and probably mediate the attachment of the 5S RNA into the large ribosomal subunit, where it forms part of the central protuberance. Functionally, required for correct processing of both the 5' and 3' ends of 5S rRNA precursor, which is does in conjunction with ribonuclease M5 (RNase M5, rnmV). Possibly folds the 5S rRNA precursor into the correct conformation, thus acting as a chaperone. The polypeptide is Large ribosomal subunit protein uL18 (Bacillus subtilis (strain 168)).